The chain runs to 383 residues: Probable assembly chaperone of rpl4 (383 aa).

Residues 1–12 (MGKPRPHKKKAS) are compositionally biased toward basic residues. Residues 1-33 (MGKPRPHKKKASKTREKSVLSAGGSISKRKMNE) are disordered. 4 TPR repeats span residues 35-68 (PRKLLEQATILLQTGQADAALSIAQQALEIATSN), 73-106 (LSSLNTIAEIYVELGEIDLARKHFLQAVELDPTG), 116-147 (AEKFLWLAQLSELGGKDSVQWFEKGVGALRGI), and 193-226 (PEVLQTLASIRISQLREDDARAALSRSLELWKDL). The segment at 345 to 383 (NKELGEEMEDDSNVEDGEGEGEEEWEGIESDSDHEMADS) is disordered. Residues 350-374 (EEMEDDSNVEDGEGEGEEEWEGIES) show a composition bias toward acidic residues.

It belongs to the ACL4 family.

It localises to the cytoplasm. It is found in the nucleus. Its function is as follows. Acts as a chaperone for the L4 ribosomal subunit, required for hierarchical ribosome assembly. Shields ribosomal protein L4 until timely release and insertion into the pre-ribosome is possible, once ribosomal protein L18 is present. The protein is Probable assembly chaperone of rpl4 of Emericella nidulans (strain FGSC A4 / ATCC 38163 / CBS 112.46 / NRRL 194 / M139) (Aspergillus nidulans).